We begin with the raw amino-acid sequence, 87 residues long: Acyl-CoA-binding protein (87 aa).

S2 carries the post-translational modification N-acetylserine. Residues 2–87 (SQAEFDKAAE…VEDLKKKYGI (86 aa)) enclose the ACB domain. Residue K8 is modified to N6-acetyllysine; alternate. At K8 the chain carries N6-succinyllysine; alternate. K14 provides a ligand contact to an acyl-CoA. K17 bears the N6-succinyllysine mark. K19 bears the N6-acetyllysine mark. Position 29 is a phosphotyrosine (Y29). Residues 29 to 33 (YSHYK), K55, and Y74 contribute to the an acyl-CoA site. An N6-acetyllysine; alternate modification is found at K55. An N6-succinyllysine; alternate modification is found at K55. An N6-(2-hydroxyisobutyryl)lysine; alternate modification is found at K55. The residue at position 55 (K55) is an N6-malonyllysine; alternate. N6-acetyllysine; alternate is present on K77. N6-succinyllysine; alternate is present on K77.

It belongs to the ACBP family. Monomer.

It is found in the endoplasmic reticulum. Its subcellular location is the golgi apparatus. Its function is as follows. Binds medium- and long-chain acyl-CoA esters with very high affinity and may function as an intracellular carrier of acyl-CoA esters. This chain is Acyl-CoA-binding protein (DBI), found in Canis lupus familiaris (Dog).